Reading from the N-terminus, the 420-residue chain is UDP-N-acetylglucosamine 1-carboxyvinyltransferase (420 aa).

Phosphoenolpyruvate is bound at residue 22–23 (KN). Residue Arg-91 participates in UDP-N-acetyl-alpha-D-glucosamine binding. Cys-115 (proton donor) is an active-site residue. Residue Cys-115 is modified to 2-(S-cysteinyl)pyruvic acid O-phosphothioketal. UDP-N-acetyl-alpha-D-glucosamine-binding positions include 120–124 (RPVDL), 160–163 (KVSV), Asp-305, and Ile-327.

Belongs to the EPSP synthase family. MurA subfamily.

The protein resides in the cytoplasm. It carries out the reaction phosphoenolpyruvate + UDP-N-acetyl-alpha-D-glucosamine = UDP-N-acetyl-3-O-(1-carboxyvinyl)-alpha-D-glucosamine + phosphate. It functions in the pathway cell wall biogenesis; peptidoglycan biosynthesis. In terms of biological role, cell wall formation. Adds enolpyruvyl to UDP-N-acetylglucosamine. The polypeptide is UDP-N-acetylglucosamine 1-carboxyvinyltransferase (Pectobacterium carotovorum subsp. carotovorum (strain PC1)).